Reading from the N-terminus, the 222-residue chain is Superoxide dismutase [Mn], mitochondrial (222 aa).

A mitochondrion-targeting transit peptide spans 1–24; the sequence is MLSRGVCGTSRQLAPALGYLGSRQ. A Mn(2+)-binding site is contributed by His50. Residue Tyr58 is modified to 3'-nitrotyrosine. Residues Lys68 and Lys75 each carry the N6-acetyllysine; alternate modification. Residues Lys68 and Lys75 each carry the N6-succinyllysine; alternate modification. A Mn(2+)-binding site is contributed by His98. Lys114 carries the N6-acetyllysine modification. An N6-acetyllysine; alternate mark is found at Lys122 and Lys130. N6-succinyllysine; alternate occurs at positions 122 and 130. Residues Asp183 and His187 each coordinate Mn(2+). Residue Lys202 is modified to N6-acetyllysine.

Belongs to the iron/manganese superoxide dismutase family. In terms of assembly, homotetramer. It depends on Mn(2+) as a cofactor. In terms of processing, nitrated under oxidative stress. Nitration coupled with oxidation inhibits the catalytic activity. Acetylation at Lys-122 decreases enzymatic activity. Deacetylated by SIRT3 upon exposure to ionizing radiations or after long fasting. Post-translationally, polyubiquitinated; leading to proteasomal degradation. Deubiquitinated by USP36 which increases protein stability.

The protein resides in the mitochondrion matrix. The enzyme catalyses 2 superoxide + 2 H(+) = H2O2 + O2. Its function is as follows. Destroys superoxide anion radicals which are normally produced within the cells and which are toxic to biological systems. This is Superoxide dismutase [Mn], mitochondrial (SOD2) from Pongo pygmaeus (Bornean orangutan).